The following is a 282-amino-acid chain: Formamidopyrimidine-DNA glycosylase (282 aa).

The active-site Schiff-base intermediate with DNA is P2. Residue E3 is the Proton donor of the active site. K60 acts as the Proton donor; for beta-elimination activity in catalysis. The DNA site is built by H99, R118, and R163. The FPG-type zinc-finger motif lies at 248–282 (WVYGRTGEPCRVCGTSIERLKLGGRSAHFCPRCQA). Catalysis depends on R272, which acts as the Proton donor; for delta-elimination activity.

The protein belongs to the FPG family. As to quaternary structure, monomer. It depends on Zn(2+) as a cofactor.

It carries out the reaction Hydrolysis of DNA containing ring-opened 7-methylguanine residues, releasing 2,6-diamino-4-hydroxy-5-(N-methyl)formamidopyrimidine.. It catalyses the reaction 2'-deoxyribonucleotide-(2'-deoxyribose 5'-phosphate)-2'-deoxyribonucleotide-DNA = a 3'-end 2'-deoxyribonucleotide-(2,3-dehydro-2,3-deoxyribose 5'-phosphate)-DNA + a 5'-end 5'-phospho-2'-deoxyribonucleoside-DNA + H(+). Involved in base excision repair of DNA damaged by oxidation or by mutagenic agents. Acts as a DNA glycosylase that recognizes and removes damaged bases. Has a preference for oxidized purines, such as 7,8-dihydro-8-oxoguanine (8-oxoG). Has AP (apurinic/apyrimidinic) lyase activity and introduces nicks in the DNA strand. Cleaves the DNA backbone by beta-delta elimination to generate a single-strand break at the site of the removed base with both 3'- and 5'-phosphates. This chain is Formamidopyrimidine-DNA glycosylase, found in Rippkaea orientalis (strain PCC 8801 / RF-1) (Cyanothece sp. (strain PCC 8801)).